The sequence spans 95 residues: Bombyxin C-2 (95 aa).

The signal sequence occupies residues 1 to 19 (MKLVILLVVVSAMLVLGGA). The residue at position 20 (Q20) is a Pyrrolidone carboxylic acid. Disulfide bonds link C27/C76, C39/C89, and C75/C80. The propeptide at 47-67 (SGSQYAGYGWPWLPPFSSSRG) is c peptide like.

This sequence belongs to the insulin family. In terms of assembly, heterodimer of a B chain and an A chain linked by two disulfide bonds.

The protein localises to the secreted. Brain peptide responsible for activation of prothoracic glands to produce ecdysone in insects. This chain is Bombyxin C-2 (BBXC2), found in Bombyx mori (Silk moth).